Here is a 561-residue protein sequence, read N- to C-terminus: Asparagine synthetase [glutamine-hydrolyzing] (561 aa).

Cysteine 2 functions as the For GATase activity in the catalytic mechanism. Residues 2–191 (CGIWALFGSD…PGHYEVLDLK (190 aa)) form the Glutamine amidotransferase type-2 domain. L-glutamine contacts are provided by residues 49 to 53 (RLAVV), 75 to 77 (NGE), and aspartate 97. One can recognise an Asparagine synthetase domain in the interval 213-536 (HALYDGVEKL…PGRADWLPHY (324 aa)). Residues leucine 256, isoleucine 288, and 363–364 (SG) each bind ATP. Lysine 385 is modified (N6-acetyllysine). Position 545 is a phosphothreonine (threonine 545).

The catalysed reaction is L-aspartate + L-glutamine + ATP + H2O = L-asparagine + L-glutamate + AMP + diphosphate + H(+). The protein operates within amino-acid biosynthesis; L-asparagine biosynthesis; L-asparagine from L-aspartate (L-Gln route): step 1/1. The polypeptide is Asparagine synthetase [glutamine-hydrolyzing] (ASNS) (Bos taurus (Bovine)).